We begin with the raw amino-acid sequence, 351 residues long: Anthranilate phosphoribosyltransferase (351 aa).

5-phospho-alpha-D-ribose 1-diphosphate contacts are provided by residues glycine 85, 88 to 89 (GD), serine 93, 95 to 98 (NIST), 113 to 121 (KHGNRAASS), and threonine 125. Anthranilate is bound at residue glycine 85. Serine 97 serves as a coordination point for Mg(2+). Asparagine 116 is an anthranilate binding site. Arginine 171 contributes to the anthranilate binding site. Mg(2+) is bound by residues aspartate 229 and glutamate 230.

The protein belongs to the anthranilate phosphoribosyltransferase family. Homodimer. Mg(2+) is required as a cofactor.

It catalyses the reaction N-(5-phospho-beta-D-ribosyl)anthranilate + diphosphate = 5-phospho-alpha-D-ribose 1-diphosphate + anthranilate. It functions in the pathway amino-acid biosynthesis; L-tryptophan biosynthesis; L-tryptophan from chorismate: step 2/5. In terms of biological role, catalyzes the transfer of the phosphoribosyl group of 5-phosphorylribose-1-pyrophosphate (PRPP) to anthranilate to yield N-(5'-phosphoribosyl)-anthranilate (PRA). This chain is Anthranilate phosphoribosyltransferase, found in Saccharopolyspora erythraea (strain ATCC 11635 / DSM 40517 / JCM 4748 / NBRC 13426 / NCIMB 8594 / NRRL 2338).